The chain runs to 223 residues: Thylakoid lumenal 15.0 kDa protein 2, chloroplastic (223 aa).

The protein localises to the plastid. It is found in the chloroplast thylakoid lumen. This chain is Thylakoid lumenal 15.0 kDa protein 2, chloroplastic, found in Arabidopsis thaliana (Mouse-ear cress).